The sequence spans 110 residues: Small ribosomal subunit protein bS16 (110 aa).

Residues 84–110 form a disordered region; it reads KRAPRNNPEKAVPRKERKAAAEAAAKA. Residues 90–103 show a composition bias toward basic and acidic residues; it reads NPEKAVPRKERKAA.

This sequence belongs to the bacterial ribosomal protein bS16 family.

This is Small ribosomal subunit protein bS16 from Afipia carboxidovorans (strain ATCC 49405 / DSM 1227 / KCTC 32145 / OM5) (Oligotropha carboxidovorans).